The sequence spans 196 residues: Autophagy-related protein 31 (196 aa).

The segment at 20-45 is disordered; the sequence is IKNNKGPSNDDQPAYNNESKSTDGSD. Residues 22–43 are compositionally biased toward polar residues; the sequence is NNKGPSNDDQPAYNNESKSTDG. Phosphoserine occurs at positions 38 and 40. Thr41 carries the post-translational modification Phosphothreonine. Ser44 and Ser116 each carry phosphoserine. Polar residues predominate over residues 120–129; that stretch reads EENQMRTLSS. A disordered region spans residues 120–145; that stretch reads EENQMRTLSSHGDDKSNDEEEELSVD. Phosphoserine is present on residues Ser135, Ser143, Ser146, Ser153, Ser174, and Ser195. Residues 135–144 are compositionally biased toward acidic residues; the sequence is SNDEEEELSV.

Forms a stable complex with ATG17 and ATG29. Interacts directly with ATG29. The ATG17-ATG29-ATG31 complex interacts with the ATG1-ATG13 complex. Note=The interaction with the ATG1-ATG13 complex is induced by starvation. Post-translationally, highly phosphorylated. Ser-174 is phosphorylated constitutively. Phosphorylation at Ser-174 is required for autophagy induced by various autophagy stimuli such as nitrogen starvation and rapamycin treatment.

It is found in the cytoplasm. The protein resides in the cytoskeleton. It localises to the preautophagosomal structure. Its function is as follows. Plays a role in starvation-induced autophagy. Involved in mitophagy. Functions with ATG17 and ATG29 at the preautophagosomal structure (PAS) in order to form normal autophagosomes under starvation conditions. May be involved in microtubule function, such as chromosome segregation and karyogamy. This chain is Autophagy-related protein 31 (ATG31), found in Saccharomyces cerevisiae (strain ATCC 204508 / S288c) (Baker's yeast).